Here is a 2828-residue protein sequence, read N- to C-terminus: Matrix-remodeling-associated protein 5 (2828 aa).

The first 26 residues, 1-26 (MPKRAHWGALSVVLILLWGHPRVALA), serve as a signal peptide directing secretion. Residues 27-55 (CPHPCACYVPSEVHCTFRSLASVPAGIAK) enclose the LRRNT domain. 6 LRR repeats span residues 56 to 77 (HVERINLGFNSIQALSETSFAG), 80 to 101 (KLELLMIHGNEIPSIPDGALRD), 104 to 125 (SLQVFKFSYNKLRVITGQTLQG), 128 to 149 (NLMRLHIDHNKIEFIHPQAFNG), 152 to 173 (SLRLLHLEGNLLHQLHPSTFST), and 184 to 205 (TIRHLYLAENMVRTLPASMLRN). An LRRCT domain is found at 217-277 (NPWTCDCEMR…HKLKDMTCLK (61 aa)). Asn287 and Asn321 each carry an N-linked (GlcNAc...) asparagine glycan. Ig-like C2-type domains are found at residues 481–571 (PSGA…YRVL) and 575–669 (PSTQ…ITVT). Cystine bridges form between Cys501–Cys555 and Cys599–Cys651. Residue Asn633 is glycosylated (N-linked (GlcNAc...) asparagine). Disordered regions lie at residues 671-715 (KGSG…RRLL), 933-962 (KPTHEETATEGWSAADVGSSPEPTSSEYEP), 1068-1190 (QGGN…APDI), 1204-1275 (AWVD…SSET), and 1367-1389 (EESSPVGFPGTPTWNPSRTAQPG). Residues 695–708 (IVEDEGGSGMGDEE) show a composition bias toward acidic residues. A glycan (O-linked (Xyl...) (chondroitin sulfate) serine) is linked at Ser702. The segment covering 951–962 (SSPEPTSSEYEP) has biased composition (low complexity). Polar residues predominate over residues 1090–1107 (SKSITLPDSTLGIMSSMS). Basic residues predominate over residues 1146–1168 (PSRRRPNGRRRLRPNKFRHRHKQ). Polar residues-rich tracts occupy residues 1169–1190 (TPPTTFAPSETFSTQPTQAPDI) and 1204–1214 (AWVDNTVNTPK). Residues 1229-1243 (TPRRKHGKRPNKHRY) show a composition bias toward basic residues. A glycan (N-linked (GlcNAc...) asparagine) is linked at Asn1403. One copy of the LRR 7 repeat lies at 1410-1434 (LKELEDVDFTSEFLSSLTVSTPFHQ). Disordered stretches follow at residues 1479 to 1499 (QNHTPTAARMKEPASSSPSTI), 1536 to 1566 (NPETEATPVNNEGTQHMSGPNELSTPSSDQD), 1579 to 1603 (QVFGSRSLPRGPDSQRQDGRVHASH), 1669 to 1689 (STTIPLPLHMSKPSIPSKFTD), and 1700 to 1719 (KVFGNNNIPEARNPVGKPPS). A compositionally biased stretch (polar residues) spans 1542–1566 (TPVNNEGTQHMSGPNELSTPSSDQD). Asn1735 is a glycosylation site (N-linked (GlcNAc...) asparagine). 10 consecutive Ig-like C2-type domains span residues 1853 to 1946 (PQIL…LSVT), 1950 to 2041 (PQIL…IRLH), 2046 to 2140 (PPVI…LNVQ), 2146 to 2239 (ARIT…VDVV), 2242 to 2343 (PAKI…KVVT), 2345 to 2432 (PATI…KTVW), 2440 to 2534 (PKIN…LQLT), 2542 to 2630 (PIFH…RLVS), 2637 to 2722 (PEAN…PSVT), and 2733 to 2828 (PRIT…IHVF). 2 cysteine pairs are disulfide-bonded: Cys1875-Cys1928 and Cys1972-Cys2025. N-linked (GlcNAc...) asparagine glycosylation is found at Asn2007 and Asn2056. Cystine bridges form between Cys2069-Cys2122, Cys2168-Cys2221, Cys2265-Cys2324, Cys2368-Cys2418, Cys2466-Cys2518, Cys2564-Cys2616, Cys2659-Cys2711, and Cys2755-Cys2810. The N-linked (GlcNAc...) asparagine glycan is linked to Asn2693.

As to expression, detected in placenta (at protein level). Detected in cerebrospinal fluid and fibroblasts (at protein level). Highly expressed in kidney, also detected on liver and spleen. Expressed by proximal tubular cells of the kidney (at protein level). Expression highly increases during chronic kidney disease and autosomal dominant polycystic kidney disease, where is detected in cysts.

The protein localises to the secreted. In terms of biological role, in kidney, has anti-inflammatory and anti-fibrotic properties by limiting the induction of chemokines, fibronectin and collagen expression in response to TGB1 and pro-inflammatory stimuli. The sequence is that of Matrix-remodeling-associated protein 5 (MXRA5) from Homo sapiens (Human).